The sequence spans 473 residues: H(+)/Cl(-) exchange transporter ClcA (473 aa).

The Cytoplasmic portion of the chain corresponds to 1–32 (MKTDTPSLETPQAARLRRRQLIRQLLERDKTP). The helical transmembrane segment at 33 to 69 (LAILFMAAVVGTLVGLAAVAFDKGVAWLQNQRMGALV) threads the bilayer. Over 70–76 (HTADNYP) the chain is Periplasmic. A helical transmembrane segment spans residues 77–100 (LLLTVAFLCSAVLAMFGYFLVRKY). A Selectivity filter part_1 motif is present at residues 106-110 (GSGIP). Residue Ser-107 participates in chloride binding. The segment at residues 109 to 116 (IPEIEGAL) is an intramembrane region (helical). At 117–123 (EDQRPVR) the chain is on the cytoplasmic side. Transmembrane regions (helical) follow at residues 124 to 141 (WWRV…TLGG) and 148 to 166 (EGPT…LDIF). Positions 146–150 (GREGP) match the Selectivity filter part_2 motif. The Cytoplasmic portion of the chain corresponds to 167–176 (RLKGDEARHT). 2 consecutive intramembrane regions (helical) follow at residues 177-189 (LLAT…LAAA) and 193-201 (PLAGILFII). At 202–214 (EEMRPQFRYTLIS) the chain is on the cytoplasmic side. The chain crosses the membrane as a helical span at residues 215 to 232 (IKAVFIGVIMSTIMYRIF). Topologically, residues 233–252 (NHEVALIDVGKLSDAPLNTL) are periplasmic. The helical transmembrane segment at 253–281 (WLYLILGIIFGIFGPIFNKWVLGMQDLLH) threads the bilayer. The Cytoplasmic segment spans residues 282-287 (RVHGGN). Residues 288–309 (ITKWILMGGAIGGLCGLLGFVA) traverse the membrane as a helical segment. The Periplasmic segment spans residues 310-329 (PATSGGGFNLIPIATAGNFS). Helical transmembrane passes span 330–349 (MGML…LCFS) and 355–376 (GIFA…MVAV). The Selectivity filter part_3 signature appears at 355–359 (GIFAP). The chloride site is built by Ile-356 and Phe-357. Over 377-386 (ELFPQYHLEA) the chain is Periplasmic. The segment at residues 387–401 (GTFAIAGMGALLAAS) is an intramembrane region (helical). The segment at residues 402–404 (IRA) is an intramembrane region (note=Loop between two helices). Positions 405–416 (PLTGIILVLEMT) form an intramembrane region, helical. Positions 417 to 421 (DNYQL) form an intramembrane region, note=Loop between two helices. A helical transmembrane segment spans residues 422–438 (ILPMIITGLGATLLAQF). The Cytoplasmic segment spans residues 439–473 (TGGKPLYSAILARTLAKQEAEQLARSKAASASENT). Tyr-445 is a chloride binding site.

Belongs to the chloride channel (TC 2.A.49) family. ClcA subfamily. In terms of assembly, homodimer.

It localises to the cell inner membrane. The enzyme catalyses 2 chloride(in) + H(+)(out) = 2 chloride(out) + H(+)(in). Its function is as follows. Proton-coupled chloride transporter. Functions as antiport system and exchanges two chloride ions for 1 proton. Probably acts as an electrical shunt for an outwardly-directed proton pump that is linked to amino acid decarboxylation, as part of the extreme acid resistance (XAR) response. The chain is H(+)/Cl(-) exchange transporter ClcA from Escherichia coli O9:H4 (strain HS).